Here is a 146-residue protein sequence, read N- to C-terminus: Core protein D2 (146 aa).

It belongs to the orthopoxvirus OPG114 family. Part of a complex composed of the kinase OPG054, OPG092, OPG100, OPG114, OPG115, OPG142 and OPG157.

The protein localises to the virion. Functionally, late protein which is part of a large complex required for early virion morphogenesis. This complex participates in the formation of virosomes and the incorporation of virosomal contents into nascent immature virions. The protein is Core protein D2 (OPG114) of Homo sapiens (Human).